A 27-amino-acid polypeptide reads, in one-letter code: Caerulein precursor fragment R1 (27 aa).

Expressed by the skin glands.

The protein localises to the secreted. In terms of biological role, antimicrobial peptide. This Xenopus ruwenzoriensis (Uganda clawed frog) protein is Caerulein precursor fragment R1.